The following is a 271-amino-acid chain: 3-methyl-2-oxobutanoate hydroxymethyltransferase (271 aa).

Mg(2+)-binding residues include Asp-51 and Asp-90. 3-methyl-2-oxobutanoate is bound by residues 51 to 52 (DS), Asp-90, and Lys-118. Glu-120 provides a ligand contact to Mg(2+). Glu-186 serves as the catalytic Proton acceptor.

Belongs to the PanB family. As to quaternary structure, homodecamer; pentamer of dimers. The cofactor is Mg(2+).

It is found in the cytoplasm. The catalysed reaction is 3-methyl-2-oxobutanoate + (6R)-5,10-methylene-5,6,7,8-tetrahydrofolate + H2O = 2-dehydropantoate + (6S)-5,6,7,8-tetrahydrofolate. The protein operates within cofactor biosynthesis; (R)-pantothenate biosynthesis; (R)-pantoate from 3-methyl-2-oxobutanoate: step 1/2. Functionally, catalyzes the reversible reaction in which hydroxymethyl group from 5,10-methylenetetrahydrofolate is transferred onto alpha-ketoisovalerate to form ketopantoate. The protein is 3-methyl-2-oxobutanoate hydroxymethyltransferase of Xanthomonas oryzae pv. oryzae (strain MAFF 311018).